A 157-amino-acid chain; its full sequence is MGVIEFLLALAQDMILAAIPAVGFAMVFNVPVRALRWCALLGSIGHGSRMILMTSGLNIEWSTFMASMLVGTIGIQWSRWYLAHPKVFTVAAVIPMFPGISAYTAMISSVKISQLGYSEPLMITLLTNFLTASSIVGALSIGLSIPGLWLYRKRPRV.

The next 4 membrane-spanning stretches (helical) occupy residues 8–28, 50–70, 87–107, and 129–149; these read LALA…AMVF, MILM…SMLV, VFTV…TAMI, and FLTA…PGLW.

Belongs to the ThrE exporter (TC 2.A.79) family. As to quaternary structure, the transporter is composed of YjjB and YjjP.

It localises to the cell inner membrane. Functionally, involved in succinate export with YjjP. Both proteins are required for export. The protein is Probable succinate transporter subunit YjjB of Shigella flexneri serotype 5b (strain 8401).